The following is a 704-amino-acid chain: Elongation factor G (704 aa).

The tr-type G domain occupies 8–290 (ARYRNIGISA…AVIDYLPAPT (283 aa)). Residues 17–24 (AHIDAGKT), 88–92 (DTPGH), and 142–145 (NKMD) each bind GTP.

It belongs to the TRAFAC class translation factor GTPase superfamily. Classic translation factor GTPase family. EF-G/EF-2 subfamily.

The protein localises to the cytoplasm. Its function is as follows. Catalyzes the GTP-dependent ribosomal translocation step during translation elongation. During this step, the ribosome changes from the pre-translocational (PRE) to the post-translocational (POST) state as the newly formed A-site-bound peptidyl-tRNA and P-site-bound deacylated tRNA move to the P and E sites, respectively. Catalyzes the coordinated movement of the two tRNA molecules, the mRNA and conformational changes in the ribosome. This chain is Elongation factor G, found in Pectobacterium atrosepticum (strain SCRI 1043 / ATCC BAA-672) (Erwinia carotovora subsp. atroseptica).